Here is a 55-residue protein sequence, read N- to C-terminus: Ferredoxin-1 (55 aa).

2 consecutive 4Fe-4S ferredoxin-type domains span residues 2–27 (YKIE…EQGD) and 28–55 (TIFV…PVAE). Residues C8, C11, C14, C18, C37, C40, C43, and C47 each coordinate [4Fe-4S] cluster.

Requires [4Fe-4S] cluster as cofactor.

Ferredoxins are iron-sulfur proteins that transfer electrons in a wide variety of metabolic reactions. This Rhodospirillum rubrum protein is Ferredoxin-1.